The following is a 142-amino-acid chain: Two-component response regulator ARR22 (142 aa).

In terms of domain architecture, Response regulatory spans 23–140; that stretch reads NVLIVDDDPL…KIFPLISHLF (118 aa). The residue at position 74 (Asp74) is a 4-aspartylphosphate.

This sequence belongs to the ARR family. Type-A subfamily. In terms of processing, two-component system major event consists of a His-to-Asp phosphorelay between a sensor histidine kinase (HK) and a response regulator (RR). In plants, the His-to-Asp phosphorelay involves an additional intermediate named Histidine-containing phosphotransfer protein (HPt). This multistep phosphorelay consists of a His-Asp-His-Asp sequential transfer of a phosphate group between first a His and an Asp of the HK protein, followed by the transfer to a conserved His of the HPt protein and finally the transfer to an Asp in the receiver domain of the RR protein.

The protein localises to the nucleus. In terms of biological role, functions as a response regulator involved in His-to-Asp phosphorelay signal transduction system. Phosphorylation of the Asp residue in the receiver domain activates the ability of the protein to promote the transcription of target genes. Type-A response regulators seem to act as negative regulators of the cytokinin signaling. This chain is Two-component response regulator ARR22 (ARR22), found in Arabidopsis thaliana (Mouse-ear cress).